Reading from the N-terminus, the 77-residue chain is Acyl carrier protein (77 aa).

In terms of domain architecture, Carrier spans Met-1 to Gly-76. Ser-36 bears the O-(pantetheine 4'-phosphoryl)serine mark.

This sequence belongs to the acyl carrier protein (ACP) family. Post-translationally, 4'-phosphopantetheine is transferred from CoA to a specific serine of apo-ACP by AcpS. This modification is essential for activity because fatty acids are bound in thioester linkage to the sulfhydryl of the prosthetic group.

The protein localises to the cytoplasm. The protein operates within lipid metabolism; fatty acid biosynthesis. Carrier of the growing fatty acid chain in fatty acid biosynthesis. The protein is Acyl carrier protein of Campylobacter curvus (strain 525.92).